The chain runs to 157 residues: Probable succinate transporter subunit YjjB (157 aa).

4 consecutive transmembrane segments (helical) span residues 10–30 (LAQD…VFNV), 55–75 (AGFN…SIGI), 87–107 (IFTV…TAMI), and 129–149 (FLKA…PGLW).

It belongs to the ThrE exporter (TC 2.A.79) family. The transporter is composed of YjjB and YjjP.

The protein resides in the cell inner membrane. In terms of biological role, involved in succinate export with YjjP. Both proteins are required for export. Participates in succinate export, but also in the export of other dicarboxylates, such as fumarate and malate. Contributes to succinate production under both aerobic and anaerobic conditions, and increases fumarate and malate production during anaerobic succinate production. This is Probable succinate transporter subunit YjjB from Klebsiella aerogenes (strain ATCC 13048 / DSM 30053 / CCUG 1429 / JCM 1235 / KCTC 2190 / NBRC 13534 / NCIMB 10102 / NCTC 10006 / CDC 819-56) (Enterobacter aerogenes).